A 255-amino-acid chain; its full sequence is Small ribosomal subunit protein eS1 (255 aa).

Over residues 1–18 (MAVGKNKRLSKGKKGLKK) the composition is skewed to basic residues. A disordered region spans residues 1 to 28 (MAVGKNKRLSKGKKGLKKRTQDPFSRKD). Ala2 carries the post-translational modification N-acetylalanine; partial. Residues 19–28 (RTQDPFSRKD) show a composition bias toward basic and acidic residues.

Belongs to the eukaryotic ribosomal protein eS1 family. In terms of assembly, component of the small ribosomal subunit. Mature ribosomes consist of a small (40S) and a large (60S) subunit. The 40S subunit contains about 33 different proteins and 1 molecule of RNA (18S). The 60S subunit contains about 49 different proteins and 3 molecules of RNA (25S, 5.8S and 5S).

The protein localises to the cytoplasm. The protein is Small ribosomal subunit protein eS1 of Ajellomyces dermatitidis (strain ER-3 / ATCC MYA-2586) (Blastomyces dermatitidis).